Reading from the N-terminus, the 150-residue chain is Ribonuclease H (150 aa).

The RNase H type-1 domain occupies Met-1–Ala-146. Residues Asp-9, Glu-52, Asp-74, and Asp-138 each coordinate Mg(2+).

This sequence belongs to the RNase H family. Monomer. Mg(2+) is required as a cofactor.

It localises to the cytoplasm. The enzyme catalyses Endonucleolytic cleavage to 5'-phosphomonoester.. Endonuclease that specifically degrades the RNA of RNA-DNA hybrids. This chain is Ribonuclease H, found in Roseobacter denitrificans (strain ATCC 33942 / OCh 114) (Erythrobacter sp. (strain OCh 114)).